The primary structure comprises 98 residues: NADH-ubiquinone oxidoreductase chain 4L (98 aa).

Transmembrane regions (helical) follow at residues 1–21 (MPVV…GLLI), 29–49 (SLLC…VTVL), and 61–81 (IILL…LVMV).

This sequence belongs to the complex I subunit 4L family. Core subunit of respiratory chain NADH dehydrogenase (Complex I) which is composed of 45 different subunits.

It localises to the mitochondrion inner membrane. The catalysed reaction is a ubiquinone + NADH + 5 H(+)(in) = a ubiquinol + NAD(+) + 4 H(+)(out). In terms of biological role, core subunit of the mitochondrial membrane respiratory chain NADH dehydrogenase (Complex I) which catalyzes electron transfer from NADH through the respiratory chain, using ubiquinone as an electron acceptor. Part of the enzyme membrane arm which is embedded in the lipid bilayer and involved in proton translocation. The protein is NADH-ubiquinone oxidoreductase chain 4L (MT-ND4L) of Ursus americanus (American black bear).